Here is a 143-residue protein sequence, read N- to C-terminus: Large ribosomal subunit protein uL11 (143 aa).

It belongs to the universal ribosomal protein uL11 family. In terms of assembly, part of the ribosomal stalk of the 50S ribosomal subunit. Interacts with L10 and the large rRNA to form the base of the stalk. L10 forms an elongated spine to which L12 dimers bind in a sequential fashion forming a multimeric L10(L12)X complex. Post-translationally, one or more lysine residues are methylated.

In terms of biological role, forms part of the ribosomal stalk which helps the ribosome interact with GTP-bound translation factors. This is Large ribosomal subunit protein uL11 from Erythrobacter litoralis (strain HTCC2594).